A 657-amino-acid chain; its full sequence is N-acetylgalactosaminyltransferase 7 (657 aa).

The Cytoplasmic segment spans residues 1 to 6 (MRLKIG). The chain crosses the membrane as a helical; Signal-anchor for type II membrane protein span at residues 7–29 (FILRSLLVVGSFLGLVVLWSSLT). Residues 30–657 (PRPDDPSPLS…KWEMNNIHSV (628 aa)) lie on the Lumenal side of the membrane. The tract at residues 31–65 (RPDDPSPLSRMREDRDVNDPMPNRGGNGLAPGEDR) is disordered. Cystine bridges form between Cys197–Cys435, Cys426–Cys507, Cys545–Cys562, Cys585–Cys600, and Cys625–Cys640. The tract at residues 206-317 (LLTSSVVIVF…VNWYAPLVAP (112 aa)) is catalytic subdomain A. Asp247 and Arg277 together coordinate substrate. Mn(2+) is bound by residues Asp301 and His303. Residues 381–443 (PYRSPAMAGG…PCSRVGHIYR (63 aa)) are catalytic subdomain B. A substrate-binding site is contributed by Trp412. His440 contributes to the Mn(2+) binding site. Residue Arg443 coordinates substrate. A Ricin B-type lectin domain is found at 532–652 (VDWGEIRGFE…SKTTQKWEMN (121 aa)).

Belongs to the glycosyltransferase 2 family. GalNAc-T subfamily. Mn(2+) is required as a cofactor. In terms of tissue distribution, widely expressed. Expressed in uterus, retina, kidney, small intestine, omentum, stomach and CNS.

It is found in the golgi apparatus membrane. The enzyme catalyses L-seryl-[protein] + UDP-N-acetyl-alpha-D-galactosamine = a 3-O-[N-acetyl-alpha-D-galactosaminyl]-L-seryl-[protein] + UDP + H(+). It carries out the reaction L-threonyl-[protein] + UDP-N-acetyl-alpha-D-galactosamine = a 3-O-[N-acetyl-alpha-D-galactosaminyl]-L-threonyl-[protein] + UDP + H(+). It participates in protein modification; protein glycosylation. Functionally, glycopeptide transferase involved in O-linked oligosaccharide biosynthesis, which catalyzes the transfer of an N-acetyl-D-galactosamine residue to an already glycosylated peptide. In contrast to other proteins of the family, it does not act as a peptide transferase that transfers GalNAc onto serine or threonine residue on the protein receptor, but instead requires the prior addition of a GalNAc on a peptide before adding additional GalNAc moieties. Some peptide transferase activity is however not excluded, considering that its appropriate peptide substrate may remain unidentified. The protein is N-acetylgalactosaminyltransferase 7 (GALNT7) of Homo sapiens (Human).